The sequence spans 256 residues: Metallo-beta-lactamase type 2 (256 aa).

A signal peptide spans 1-29 (MKNTLLKLGVCVSLLGITPFVSTISSVQA). Zn(2+)-binding residues include histidine 115, histidine 117, aspartate 119, histidine 178, and cysteine 197. Substrate is bound by residues lysine 200 and asparagine 209. Residue histidine 239 participates in Zn(2+) binding.

The protein belongs to the metallo-beta-lactamase superfamily. Class-B beta-lactamase family. As to quaternary structure, monomer. Zn(2+) is required as a cofactor.

The protein resides in the periplasm. It carries out the reaction a beta-lactam + H2O = a substituted beta-amino acid. With respect to regulation, inhibited by chelating agents such as EDTA. Its function is as follows. Confers resistance to the different beta-lactams antibiotics (penicillin, cephalosporin and carbapenem) via the hydrolysis of the beta-lactam ring. Benzylpenicillin is a better substrate than cephalosporin C and ampicillin. This is Metallo-beta-lactamase type 2 from Bacillus cereus.